Reading from the N-terminus, the 66-residue chain is Large ribosomal subunit protein bL32 (66 aa).

Residues 1 to 20 (MAVPKRRKSKSKVRTKRAHH) form a disordered region.

Belongs to the bacterial ribosomal protein bL32 family.

The chain is Large ribosomal subunit protein bL32 from Leptospira borgpetersenii serovar Hardjo-bovis (strain JB197).